Consider the following 199-residue polypeptide: Fe/S biogenesis protein NfuA (199 aa).

The [4Fe-4S] cluster site is built by C151 and C154.

It belongs to the NfuA family. Homodimer. Requires [4Fe-4S] cluster as cofactor.

Involved in iron-sulfur cluster biogenesis. Binds a 4Fe-4S cluster, can transfer this cluster to apoproteins, and thereby intervenes in the maturation of Fe/S proteins. Could also act as a scaffold/chaperone for damaged Fe/S proteins. The sequence is that of Fe/S biogenesis protein NfuA from Xanthomonas oryzae pv. oryzae (strain PXO99A).